Consider the following 240-residue polypeptide: Poxin (240 aa).

Histidine 46 acts as the Proton donor in catalysis. Tyrosine 181 (shared with catalytic histidine of dimeric partner) is an active-site residue. Lysine 185 (proton acceptor; shared with catalytic histidine of dimeric partner) is an active-site residue.

The protein belongs to the poxin family. Homodimer.

It carries out the reaction 2',3'-cGAMP + H2O = Gp(2'-5')Ap(3') + H(+). Its function is as follows. Nuclease that cleaves host 2',3'-cGAMP. This chain is Poxin (P26), found in Lepidoptera (butterflies and moths).